The chain runs to 227 residues: Lipoprotein-releasing system ATP-binding protein LolD (227 aa).

An ABC transporter domain is found at 7–227 (LSCRNLGKSY…RLEGGRLVEA (221 aa)). 43–50 (GTSGSGKS) contacts ATP.

This sequence belongs to the ABC transporter superfamily. Lipoprotein translocase (TC 3.A.1.125) family. As to quaternary structure, the complex is composed of two ATP-binding proteins (LolD) and two transmembrane proteins (LolC and LolE).

It is found in the cell inner membrane. Functionally, part of the ABC transporter complex LolCDE involved in the translocation of mature outer membrane-directed lipoproteins, from the inner membrane to the periplasmic chaperone, LolA. Responsible for the formation of the LolA-lipoprotein complex in an ATP-dependent manner. This chain is Lipoprotein-releasing system ATP-binding protein LolD, found in Pseudomonas syringae pv. tomato (strain ATCC BAA-871 / DC3000).